The chain runs to 303 residues: Probable 5-dehydro-4-deoxyglucarate dehydratase (303 aa).

This sequence belongs to the DapA family.

The catalysed reaction is 5-dehydro-4-deoxy-D-glucarate + H(+) = 2,5-dioxopentanoate + CO2 + H2O. The protein operates within carbohydrate acid metabolism; D-glucarate degradation; 2,5-dioxopentanoate from D-glucarate: step 2/2. The polypeptide is Probable 5-dehydro-4-deoxyglucarate dehydratase (Pseudomonas syringae pv. tomato (strain ATCC BAA-871 / DC3000)).